Consider the following 215-residue polypeptide: Oligoribonuclease (215 aa).

The 166-residue stretch at 5 to 170 folds into the Exonuclease domain; sequence LVWIDCEMTG…ADIHESIREL (166 aa). Residue Tyr127 is part of the active site. Residues 196 to 215 form a disordered region; it reads LDEGKDAPGPSDSASAPPTG. Residues 202–215 are compositionally biased toward low complexity; sequence APGPSDSASAPPTG.

It belongs to the oligoribonuclease family.

The protein resides in the cytoplasm. 3'-to-5' exoribonuclease specific for small oligoribonucleotides. In Mycolicibacterium paratuberculosis (strain ATCC BAA-968 / K-10) (Mycobacterium paratuberculosis), this protein is Oligoribonuclease.